Consider the following 341-residue polypeptide: Hyaluronidase A (341 aa).

3 N-linked (GlcNAc...) asparagine glycosylation sites follow: Asn-3, Asn-68, and Asn-83. Intrachain disulfides connect Cys-23–Cys-311 and Cys-189–Cys-201.

It belongs to the glycosyl hydrolase 56 family. As to expression, expressed by the venom gland.

The protein resides in the secreted. The catalysed reaction is Random hydrolysis of (1-&gt;4)-linkages between N-acetyl-beta-D-glucosamine and D-glucuronate residues in hyaluronate.. Its function is as follows. May hydrolyze high molecular weight hyaluronic acid to produce small oligosaccharides. This is Hyaluronidase A from Vespa velutina (Asian yellow-legged hornet).